Here is a 368-residue protein sequence, read N- to C-terminus: 3-dehydroquinate synthase (368 aa).

Residues 69 to 74, 103 to 107, 127 to 128, lysine 140, and lysine 149 contribute to the NAD(+) site; these read DGEAYK, GVIGD, and TT. Residues glutamate 182, histidine 245, and histidine 262 each coordinate Zn(2+).

It belongs to the sugar phosphate cyclases superfamily. Dehydroquinate synthase family. Co(2+) serves as cofactor. It depends on Zn(2+) as a cofactor. NAD(+) is required as a cofactor.

Its subcellular location is the cytoplasm. It carries out the reaction 7-phospho-2-dehydro-3-deoxy-D-arabino-heptonate = 3-dehydroquinate + phosphate. It functions in the pathway metabolic intermediate biosynthesis; chorismate biosynthesis; chorismate from D-erythrose 4-phosphate and phosphoenolpyruvate: step 2/7. In terms of biological role, catalyzes the conversion of 3-deoxy-D-arabino-heptulosonate 7-phosphate (DAHP) to dehydroquinate (DHQ). The protein is 3-dehydroquinate synthase of Pseudomonas paraeruginosa (strain DSM 24068 / PA7) (Pseudomonas aeruginosa (strain PA7)).